Consider the following 463-residue polypeptide: uncharacterized protein (463 aa).

A TRAM domain is found at 12 to 70; it reads LWQQGSVVELTITGLNHQGEGIGRFNERVVFVPDTAPGDRLEVRLVKVKRNYALAQLLK. C83, C89, C92, and C171 together coordinate [4Fe-4S] cluster. S-adenosyl-L-methionine-binding residues include Q295, Y324, E345, and D390. C417 functions as the Nucleophile in the catalytic mechanism.

Belongs to the class I-like SAM-binding methyltransferase superfamily. RNA M5U methyltransferase family.

This is an uncharacterized protein from Synechocystis sp. (strain ATCC 27184 / PCC 6803 / Kazusa).